Reading from the N-terminus, the 425-residue chain is 2-methylserine hydroxymethyltransferase (425 aa).

Residues L126 and 130–132 (GHL) contribute to the (6S)-5,6,7,8-tetrahydrofolate site. K235 is subject to N6-(pyridoxal phosphate)lysine.

The protein belongs to the SHMT family. As to quaternary structure, homodimer. The cofactor is pyridoxal 5'-phosphate.

Its subcellular location is the cytoplasm. The enzyme catalyses (6R)-5,10-methylene-5,6,7,8-tetrahydrofolate + D-alanine + H2O = 2-methylserine + (6S)-5,6,7,8-tetrahydrofolate. It functions in the pathway one-carbon metabolism; tetrahydrofolate interconversion. In terms of biological role, catalyzes the reversible interconversion of alpha-methyl-L-serine to D-alanine with tetrahydrofolate (THF) serving as the one-carbon carrier. Cannot use alpha-methyl-D-serine, L-serine, D-serine or L-alanine. The sequence is that of 2-methylserine hydroxymethyltransferase from Aminobacter sp.